A 374-amino-acid chain; its full sequence is DNA primase small subunit PriS (374 aa).

Residues Asp99, Asp101, and Asp281 contribute to the active site.

This sequence belongs to the eukaryotic-type primase small subunit family. In terms of assembly, heterodimer of a small subunit (PriS) and a large subunit (PriL). Requires Mg(2+) as cofactor. Mn(2+) serves as cofactor.

Catalytic subunit of DNA primase, an RNA polymerase that catalyzes the synthesis of short RNA molecules used as primers for DNA polymerase during DNA replication. The small subunit contains the primase catalytic core and has DNA synthesis activity on its own. Binding to the large subunit stabilizes and modulates the activity, increasing the rate of DNA synthesis while decreasing the length of the DNA fragments, and conferring RNA synthesis capability. The DNA polymerase activity may enable DNA primase to also catalyze primer extension after primer synthesis. May also play a role in DNA repair. This is DNA primase small subunit PriS from Methanoregula boonei (strain DSM 21154 / JCM 14090 / 6A8).